A 173-amino-acid polypeptide reads, in one-letter code: Protein tyrosine phosphatase type IVA 3 (173 aa).

One can recognise a Tyrosine-protein phosphatase domain in the interval 8–161 (APVEVSYRHM…YRPKQRLRFK (154 aa)). A disulfide bridge connects residues Cys-49 and Cys-104. Asp-72 functions as the Proton donor in the catalytic mechanism. Residue Cys-104 is the Phosphocysteine intermediate of the active site. Arg-110 lines the substrate pocket. Cys-170 is subject to Cysteine methyl ester. A lipid anchor (S-farnesyl cysteine) is attached at Cys-170. Positions 171 to 173 (CVM) are cleaved as a propeptide — removed in mature form.

The protein belongs to the protein-tyrosine phosphatase family. In terms of assembly, interacts with tubulin. Post-translationally, farnesylated. Farnesylation is required for membrane targeting. Unfarnesylated forms are shifted into the nucleus. In terms of tissue distribution, present in the small intestine, where it is located in the differentiated epithelial cells of the villus but not in the proliferating crypt cells (at protein level). Expressed in heart and skeletal muscle, and at lower levels in lung, spleen and testis.

It localises to the cell membrane. The protein localises to the early endosome. The enzyme catalyses O-phospho-L-tyrosyl-[protein] + H2O = L-tyrosyl-[protein] + phosphate. Inhibited by sodium orthovanadate and peroxovanadium compounds, and by pentamidine. In terms of biological role, protein tyrosine phosphatase which stimulates progression from G1 into S phase during mitosis. Enhances cell proliferation, cell motility and invasive activity, and promotes cancer metastasis. May be involved in the progression of cardiac hypertrophy by inhibiting intracellular calcium mobilization in response to angiotensin II. In Mus musculus (Mouse), this protein is Protein tyrosine phosphatase type IVA 3 (Ptp4a3).